Here is a 715-residue protein sequence, read N- to C-terminus: uncharacterized protein (715 aa).

A helical transmembrane segment spans residues Val688–Phe708.

The protein belongs to the plectrovirus ORF1 family.

It localises to the host membrane. This is an uncharacterized protein from Spiroplasma virus SpV1-R8A2 B (SpV1).